A 101-amino-acid polypeptide reads, in one-letter code: Large ribosomal subunit protein uL24 (101 aa).

Belongs to the universal ribosomal protein uL24 family. As to quaternary structure, part of the 50S ribosomal subunit.

One of two assembly initiator proteins, it binds directly to the 5'-end of the 23S rRNA, where it nucleates assembly of the 50S subunit. Functionally, one of the proteins that surrounds the polypeptide exit tunnel on the outside of the subunit. The sequence is that of Large ribosomal subunit protein uL24 from Thermobifida fusca (strain YX).